The chain runs to 85 residues: Makatoxin-2 (85 aa).

Positions 1–19 are cleaved as a signal peptide; it reads MNYLIVISFALLLMTSVES. Residues 21–83 enclose the LCN-type CS-alpha/beta domain; that stretch reads RDAYIADSEN…VPIRIPGPCR (63 aa). Disulfide bonds link Cys31/Cys82, Cys35/Cys55, Cys41/Cys65, and Cys45/Cys67.

It belongs to the long (4 C-C) scorpion toxin superfamily. Sodium channel inhibitor family. Alpha subfamily. In terms of tissue distribution, expressed by the venom gland.

It is found in the secreted. In terms of biological role, this protein markedly relaxes the rat carbachol-precontracted anococcygeus muscle. This relaxation is inhibited by the inhibitor of nitric oxide (NO) synthase, N-nitro-L-arginine methyl ester (L-NAME), suggesting that the response induced by this protein is NO-mediated. This is Makatoxin-2 from Olivierus martensii (Manchurian scorpion).